The following is a 538-amino-acid chain: Atos homolog protein B (538 aa).

Over residues 1-18 (MRHVQAEPSPSSEPEAGP) the composition is skewed to low complexity. 4 disordered regions span residues 1-103 (MRHV…GLLG), 153-185 (NTLHTRDWASPDPGGQGSLGESPGPAPPGQLHT), 197-300 (GGKS…VLDP), and 323-342 (SLRKGPGLLSPPSASPVPTP). Pro residues predominate over residues 227-238 (HTPPGPGPPGPC). 2 positions are modified to phosphoserine: serine 254 and serine 255. The segment covering 323–334 (SLRKGPGLLSPP) has biased composition (low complexity). The required for macropage invasion stretch occupies residues 348–430 (LLGSFEESLL…VPKVGTIQVT (83 aa)). The segment at 436-444 (QTVVKMFLV) is transactivation domain 1 (TAD1).

It belongs to the ATOS family.

The protein localises to the nucleus. In terms of biological role, transcription regulator that may syncronize transcriptional and translational programs. This chain is Atos homolog protein B, found in Pongo abelii (Sumatran orangutan).